The following is a 660-amino-acid chain: Kinesin-like protein KIF2A (660 aa).

A disordered region spans residues 1–140 (MVTSLNEDNE…QQELREKRAQ (140 aa)). Positions 1 to 171 (MVTSLNEDNE…LDYRPLTTAD (171 aa)) are globular. A Phosphoserine modification is found at serine 48. 2 positions are modified to phosphothreonine: threonine 51 and threonine 70. The residue at position 73 (serine 73) is a Phosphoserine. At lysine 75 the chain carries N6-acetyllysine. Polar residues predominate over residues 96–106 (LPEQSSSAQQN). The segment covering 113 to 140 (CVKEVEKLQEKREKRRLQQQELREKRAQ) has biased composition (basic and acidic residues). The Kinesin motor domain occupies 177–507 (RICVCVRKRP…LRYANRVKEL (331 aa)). An ATP-binding site is contributed by 267–274 (GQTGSGKT). Residues 614–653 (ATQLEAILEQKIDILTELRDKVKSFRAALQEEEQASKQIN) adopt a coiled-coil conformation.

It belongs to the TRAFAC class myosin-kinesin ATPase superfamily. Kinesin family. MCAK/KIF2 subfamily. As to quaternary structure, interacts with AURKA and PLK1. Interacts with PSRC1. Interacts with MCRS1; the interaction enhances recruitment of KIF2A to the minus ends of spindle microtubules which promotes chromosome alignment.

The protein localises to the cytoplasm. Its subcellular location is the cytoskeleton. It localises to the microtubule organizing center. The protein resides in the centrosome. It is found in the spindle pole. The protein localises to the spindle. Functionally, plus end-directed microtubule-dependent motor required for normal brain development. May regulate microtubule dynamics during axonal growth. Required for normal progression through mitosis. Required for normal congress of chromosomes at the metaphase plate. Required for normal spindle dynamics during mitosis. Promotes spindle turnover. Implicated in formation of bipolar mitotic spindles. Has microtubule depolymerization activity. The protein is Kinesin-like protein KIF2A (KIF2A) of Bos taurus (Bovine).